Reading from the N-terminus, the 214-residue chain is Thymidylate kinase (214 aa).

10 to 17 (GPDGAGKT) contributes to the ATP binding site.

Belongs to the thymidylate kinase family.

The catalysed reaction is dTMP + ATP = dTDP + ADP. Its function is as follows. Phosphorylation of dTMP to form dTDP in both de novo and salvage pathways of dTTP synthesis. The chain is Thymidylate kinase from Latilactobacillus sakei subsp. sakei (strain 23K) (Lactobacillus sakei subsp. sakei).